The primary structure comprises 217 residues: 25 kDa ookinete surface antigen (217 aa).

A signal peptide spans 1–16 (MNKLYSLFLFLFIQLS). The EGF-like 1; truncated domain maps to 30–59 (CKRGFLIQMSGHLECKCENDLVLVNEETCE). EGF-like domains follow at residues 61–106 (KVLK…NVCI), 106–150 (IPNE…NKCS), and 153–193 (GETK…SICT). Intrachain disulfides connect cysteine 65–cysteine 80, cysteine 74–cysteine 92, cysteine 94–cysteine 105, cysteine 110–cysteine 120, cysteine 115–cysteine 133, cysteine 135–cysteine 149, cysteine 157–cysteine 168, cysteine 161–cysteine 177, and cysteine 179–cysteine 192. Asparagine 112 is a glycosylation site (N-linked (GlcNAc...) asparagine). 2 N-linked (GlcNAc...) asparagine glycosylation sites follow: asparagine 165 and asparagine 187. Serine 196 is lipidated: GPI-anchor amidated serine. Positions 197–217 (AYNILNLSIMFILFSVCFFIM) are cleaved as a propeptide — removed in mature form. A glycan (N-linked (GlcNAc...) asparagine) is linked at asparagine 202.

Its subcellular location is the cell membrane. The sequence is that of 25 kDa ookinete surface antigen from Plasmodium falciparum (isolate NF54).